The sequence spans 82 residues: Sec-independent protein translocase protein TatA (82 aa).

Residues M1 to G21 traverse the membrane as a helical segment. The segment at A42–T82 is disordered. Residues S63 to T82 show a composition bias toward basic and acidic residues.

The protein belongs to the TatA/E family. The Tat system comprises two distinct complexes: a TatABC complex, containing multiple copies of TatA, TatB and TatC subunits, and a separate TatA complex, containing only TatA subunits. Substrates initially bind to the TatABC complex, which probably triggers association of the separate TatA complex to form the active translocon.

It is found in the cell inner membrane. Part of the twin-arginine translocation (Tat) system that transports large folded proteins containing a characteristic twin-arginine motif in their signal peptide across membranes. TatA could form the protein-conducting channel of the Tat system. The polypeptide is Sec-independent protein translocase protein TatA (Helicobacter hepaticus (strain ATCC 51449 / 3B1)).